The primary structure comprises 154 residues: Deoxyuridine 5'-triphosphate nucleotidohydrolase (154 aa).

Residues 64 to 66 (RSG), N77, 81 to 83 (TID), and K91 contribute to the substrate site.

Belongs to the dUTPase family. As to quaternary structure, homotrimer. Requires Mg(2+) as cofactor.

It carries out the reaction dUTP + H2O = dUMP + diphosphate + H(+). Its pathway is pyrimidine metabolism; dUMP biosynthesis; dUMP from dCTP (dUTP route): step 2/2. This enzyme is involved in nucleotide metabolism: it produces dUMP, the immediate precursor of thymidine nucleotides and it decreases the intracellular concentration of dUTP so that uracil cannot be incorporated into DNA. The protein is Deoxyuridine 5'-triphosphate nucleotidohydrolase of Mycobacterium sp. (strain JLS).